The sequence spans 214 residues: Cytochrome c biogenesis ATP-binding export protein CcmA (214 aa).

Residues 12-214 enclose the ABC transporter domain; the sequence is LAAHDLAFSR…TRMLTLEVAA (203 aa). Position 44 to 51 (44 to 51) interacts with ATP; the sequence is GDNGAGKT.

Belongs to the ABC transporter superfamily. CcmA exporter (TC 3.A.1.107) family. As to quaternary structure, the complex is composed of two ATP-binding proteins (CcmA) and two transmembrane proteins (CcmB).

The protein localises to the cell inner membrane. It catalyses the reaction heme b(in) + ATP + H2O = heme b(out) + ADP + phosphate + H(+). Functionally, part of the ABC transporter complex CcmAB involved in the biogenesis of c-type cytochromes; once thought to export heme, this seems not to be the case, but its exact role is uncertain. Responsible for energy coupling to the transport system. This is Cytochrome c biogenesis ATP-binding export protein CcmA from Xanthomonas axonopodis pv. citri (strain 306).